A 207-amino-acid chain; its full sequence is Small ribosomal subunit protein uS4 (207 aa).

The tract at residues 31–55 (KCKLDSKPGQHGRTSGARTSDYGTQ) is disordered. Residues 42–53 (GRTSGARTSDYG) are compositionally biased toward polar residues. The S4 RNA-binding domain occupies 97 to 160 (SRLDNVVYRM…KKQARIIEAL (64 aa)).

This sequence belongs to the universal ribosomal protein uS4 family. As to quaternary structure, part of the 30S ribosomal subunit. Contacts protein S5. The interaction surface between S4 and S5 is involved in control of translational fidelity.

Its function is as follows. One of the primary rRNA binding proteins, it binds directly to 16S rRNA where it nucleates assembly of the body of the 30S subunit. In terms of biological role, with S5 and S12 plays an important role in translational accuracy. This chain is Small ribosomal subunit protein uS4, found in Burkholderia vietnamiensis (strain G4 / LMG 22486) (Burkholderia cepacia (strain R1808)).